A 287-amino-acid chain; its full sequence is Large ribosomal subunit protein uL2 (287 aa).

The interval 221–287 (RGSVMNPCDH…SKRSRGGRDS (67 aa)) is disordered. Over residues 258–287 (KTRKRNKPSNRFVLRKRRRVSKRSRGGRDS) the composition is skewed to basic residues.

Belongs to the universal ribosomal protein uL2 family. In terms of assembly, part of the 50S ribosomal subunit. Forms a bridge to the 30S subunit in the 70S ribosome.

One of the primary rRNA binding proteins. Required for association of the 30S and 50S subunits to form the 70S ribosome, for tRNA binding and peptide bond formation. It has been suggested to have peptidyltransferase activity; this is somewhat controversial. Makes several contacts with the 16S rRNA in the 70S ribosome. This chain is Large ribosomal subunit protein uL2, found in Prochlorococcus marinus (strain MIT 9211).